The chain runs to 476 residues: Mitochondrial-processing peptidase subunit beta (476 aa).

Residues 1 to 28 (MASRRLALNLAQGVKARAGGVINPFRRG) constitute a mitochondrion transit peptide. Position 84 (H84) interacts with Zn(2+). Catalysis depends on E87, which acts as the Proton acceptor. Residues H88 and E164 each coordinate Zn(2+).

Belongs to the peptidase M16 family. Heterodimer of mpp (alpha) and pep (beta) subunits, forming the mitochondrial processing protease (MPP) in which mpp is involved in substrate recognition and binding and pep is the catalytic subunit. Component of the ubiquinol-cytochrome c oxidoreductase (cytochrome b-c1 complex, complex III, CIII), a multisubunit enzyme composed of 10 subunits. The complex is composed of 3 respiratory subunits cytochrome b (cob), cytochrome c1 (cyt-1) and Rieske protein (fes-1), 2 core protein subunits pep and ucr-1, and 5 low-molecular weight protein subunits qcr6, qcr7, qcr8, qcr9 and probably NCU16844/qcr10. The complex exists as an obligatory dimer and forms supercomplexes (SCs) in the inner mitochondrial membrane with NADH-ubiquinone oxidoreductase (complex I, CI) and cytochrome c oxidase (complex IV, CIV), resulting in different assemblies (supercomplexes SCI(1)III(2), SCIII(2)IV(1) and SCIII(2)IV(2) as well as higher order I(x)III(y)IV(z) megacomplexes). The cofactor is Zn(2+).

The protein localises to the mitochondrion matrix. Its subcellular location is the mitochondrion inner membrane. It carries out the reaction Release of N-terminal transit peptides from precursor proteins imported into the mitochondrion, typically with Arg in position P2.. With respect to regulation, binding to mpp is required for catalytic activity. Inhibited by metal chelator ethylenediaminetetraacetic acid (EDTA). In terms of biological role, catalytic subunit of the essential mitochondrial processing protease (MPP), which cleaves the mitochondrial sequence off newly imported precursors proteins. Preferentially, cleaves after an arginine at position P2. Functionally, component of the ubiquinol-cytochrome c oxidoreductase, a multisubunit transmembrane complex that is part of the mitochondrial electron transport chain which drives oxidative phosphorylation. The respiratory chain contains 3 multisubunit complexes succinate dehydrogenase (complex II, CII), ubiquinol-cytochrome c oxidoreductase (cytochrome b-c1 complex, complex III, CIII) and cytochrome c oxidase (complex IV, CIV), that cooperate to transfer electrons derived from NADH and succinate to molecular oxygen, creating an electrochemical gradient over the inner membrane that drives transmembrane transport and the ATP synthase. The cytochrome b-c1 complex catalyzes electron transfer from ubiquinol to cytochrome c, linking this redox reaction to translocation of protons across the mitochondrial inner membrane, with protons being carried across the membrane as hydrogens on the quinol. In the process called Q cycle, 2 protons are consumed from the matrix, 4 protons are released into the intermembrane space and 2 electrons are passed to cytochrome c. The polypeptide is Mitochondrial-processing peptidase subunit beta (Neurospora crassa (strain ATCC 24698 / 74-OR23-1A / CBS 708.71 / DSM 1257 / FGSC 987)).